The chain runs to 360 residues: Peptide chain release factor 1 (360 aa).

The residue at position 235 (glutamine 235) is an N5-methylglutamine.

This sequence belongs to the prokaryotic/mitochondrial release factor family. Methylated by PrmC. Methylation increases the termination efficiency of RF1.

The protein resides in the cytoplasm. Functionally, peptide chain release factor 1 directs the termination of translation in response to the peptide chain termination codons UAG and UAA. The sequence is that of Peptide chain release factor 1 from Dechloromonas aromatica (strain RCB).